A 918-amino-acid chain; its full sequence is Isoleucine--tRNA ligase (918 aa).

Residues 57-67 (PYANGHIHIGT) carry the 'HIGH' region motif. L-isoleucyl-5'-AMP is bound at residue glutamate 552. A 'KMSKS' region motif is present at residues 593–597 (KMSKS). Residue lysine 596 participates in ATP binding. Zn(2+) is bound by residues cysteine 886, cysteine 889, cysteine 906, and cysteine 909.

It belongs to the class-I aminoacyl-tRNA synthetase family. IleS type 1 subfamily. As to quaternary structure, monomer. Requires Zn(2+) as cofactor.

The protein resides in the cytoplasm. It catalyses the reaction tRNA(Ile) + L-isoleucine + ATP = L-isoleucyl-tRNA(Ile) + AMP + diphosphate. In terms of biological role, catalyzes the attachment of isoleucine to tRNA(Ile). As IleRS can inadvertently accommodate and process structurally similar amino acids such as valine, to avoid such errors it has two additional distinct tRNA(Ile)-dependent editing activities. One activity is designated as 'pretransfer' editing and involves the hydrolysis of activated Val-AMP. The other activity is designated 'posttransfer' editing and involves deacylation of mischarged Val-tRNA(Ile). This chain is Isoleucine--tRNA ligase, found in Thermotoga neapolitana (strain ATCC 49049 / DSM 4359 / NBRC 107923 / NS-E).